The following is a 155-amino-acid chain: Small ribosomal subunit protein uS7 (155 aa).

This sequence belongs to the universal ribosomal protein uS7 family. As to quaternary structure, part of the 30S ribosomal subunit. Contacts proteins S9 and S11.

Functionally, one of the primary rRNA binding proteins, it binds directly to 16S rRNA where it nucleates assembly of the head domain of the 30S subunit. Is located at the subunit interface close to the decoding center, probably blocks exit of the E-site tRNA. The polypeptide is Small ribosomal subunit protein uS7 (Prosthecochloris aestuarii (strain DSM 271 / SK 413)).